A 296-amino-acid chain; its full sequence is LysM and putative peptidoglycan-binding domain-containing protein 4 (296 aa).

At 1 to 217 (MRHKELLSKT…PMDGADCGIQ (217 aa)) the chain is on the extracellular side. Asn-30 carries an N-linked (GlcNAc...) asparagine glycan. One can recognise a LysM domain in the interval 74-118 (LQRELAQEDSLNKLALQYGCKVADIKKVNNFIREQDLYALKSIKS). The chain crosses the membrane as a helical span at residues 218 to 238 (WWNAVFIMLLIGIVLPIFYLV). At 239–296 (YFKIQASGETPNSLNTAAIPNGSMAMGTVPGQAPRLAVAVPTVPSADSQFSQTTQAGN) the chain is on the cytoplasmic side.

The protein resides in the membrane. This chain is LysM and putative peptidoglycan-binding domain-containing protein 4 (LYSMD4), found in Pongo abelii (Sumatran orangutan).